A 527-amino-acid chain; its full sequence is Probable serine/threonine-protein kinase DDB_G0271538 (527 aa).

The span at 1-10 (MNINFSKDDI) shows a compositional bias: basic and acidic residues. Residues 1-24 (MNINFSKDDITGLPKSTKEEDEND) are disordered. Residues 33–294 (LFMDVEIGRG…KIVVEGLKVL (262 aa)) form the Protein kinase domain. ATP is bound by residues 39–47 (IGRGSFGQV) and lysine 60. The Proton acceptor role is filled by aspartate 156. 3 disordered regions span residues 304-375 (VKGK…ISGS), 422-452 (FTPP…DDVP), and 485-527 (TALD…KKKL). Over residues 313–324 (DPDEDSFIDPND) the composition is skewed to acidic residues. The segment covering 325-359 (DSNNNNNSENNNNNNDNSNENNENNNENNNNSNEN) has biased composition (low complexity). A compositionally biased stretch (acidic residues) spans 440-452 (VDEDEDEDEDDVP). A compositionally biased stretch (basic residues) spans 512 to 527 (PKKKPNNKNKKKKKKL).

It belongs to the protein kinase superfamily. TKL Ser/Thr protein kinase family.

The enzyme catalyses L-seryl-[protein] + ATP = O-phospho-L-seryl-[protein] + ADP + H(+). It carries out the reaction L-threonyl-[protein] + ATP = O-phospho-L-threonyl-[protein] + ADP + H(+). This is Probable serine/threonine-protein kinase DDB_G0271538 from Dictyostelium discoideum (Social amoeba).